We begin with the raw amino-acid sequence, 1220 residues long: Osmosensing histidine protein kinase SLN1 (1220 aa).

At 1 to 22 the chain is on the cytoplasmic side; the sequence is MRFGLPSKLELTPPFRIGIRTQ. Residues 23–46 traverse the membrane as a helical segment; it reads LTALVSIVALGSLIILAVTTGVYF. Over 47–333 the chain is Extracellular; the sequence is TSNYKNLRSD…FLSPATKLAK (287 aa). N-linked (GlcNAc...) asparagine glycosylation is found at N100, N138, N142, N181, N224, and N272. The helical transmembrane segment at 334–354 threads the bilayer; that stretch reads IITGTVIAIGVFVILLTLPLA. Topologically, residues 355-1220 are cytoplasmic; the sequence is HWAVQPIVRL…AAYQGKKNNK (866 aa). 2 disordered regions span residues 414–433 and 444–500; these read GSTTSVSGHGGSGHGSGAAF and NLGN…HILT. The span at 451–468 shows a compositional bias: basic and acidic residues; that stretch reads SPPEEENKIPNNHTDAKI. Residue S502 is modified to Phosphoserine. Positions 573 to 928 constitute a Histidine kinase domain; sequence NISHELRTPL…KFTFTLPLNQ (356 aa). H576 carries the post-translational modification Phosphohistidine; by autocatalysis. Residues S758 and S833 each carry the phosphoserine modification. Disordered regions lie at residues 960–1016 and 1040–1081; these read AKSI…DNGG and NSLS…VKDD. Polar residues predominate over residues 965–984; sequence SRQSTSSVATPATNRSSLTN. The span at 988-1000 shows a compositional bias: basic and acidic residues; the sequence is PEVRSKGKHETKD. A phosphoserine mark is found at S1041 and S1044. The segment covering 1063–1075 has biased composition (polar residues); the sequence is LQSTGTATSSRNI. The region spanning 1089–1210 is the Response regulatory domain; it reads KILVVEDNHV…KLKTILTEFC (122 aa). Residues E1094, D1095, D1144, and K1195 each contribute to the Mg(2+) site. D1144 is subject to 4-aspartylphosphate.

As to quaternary structure, interacts with DJP1, MOG1 and YPD1. The phosphorelay mechanism involves the sequential transfer of a phosphate group from His-576 (H1) in the histidine kinase domain (transmitter domain) to Asp-1144 (D1) of the response regulatory domain (receiver domain). This transfer probably occurs between two SLN1 molecules, rather than intramolecularly. The phosphate group is further transferred to 'His-64' (H2) of YPD1 and finally to 'Asp-554' (D2) of SSK1 or 'Asp-427' (D2) of SKN7.

The protein resides in the cell membrane. The enzyme catalyses ATP + protein L-histidine = ADP + protein N-phospho-L-histidine.. Functionally, histidine kinase that acts as an osmosensor at the plasma membrane. Part of the bifurcated SLN1-YPD1-SKN7/SSK1 two-component regulatory system, which controls activity of the HOG1 pathway and gene expression in response to changes in the osmolarity of the extracellular environment. Under normal osmotic conditions, the histidine kinase autophosphorylates His-576. This phosphate is subsequently transferred to Asp-1144, from where it is relayed to 'His-64' of the phosphorelay intermediate protein YPD1. Under high osmolarity conditions, the histidine kinase is no longer active. The polypeptide is Osmosensing histidine protein kinase SLN1 (SLN1) (Saccharomyces cerevisiae (strain ATCC 204508 / S288c) (Baker's yeast)).